A 272-amino-acid polypeptide reads, in one-letter code: Dihydropteroate synthase (272 aa).

Residues 1 to 251 enclose the Pterin-binding domain; the sequence is MIKTKIMGIL…GVRVHNVLLN (251 aa). A Mg(2+)-binding site is contributed by Asn-11. Residues Thr-51, Asp-89, Asn-108, Asp-172, Lys-208, and 244 to 246 each bind (7,8-dihydropterin-6-yl)methyl diphosphate; that span reads RVH.

Belongs to the DHPS family. Homodimer. Requires Mg(2+) as cofactor.

The catalysed reaction is (7,8-dihydropterin-6-yl)methyl diphosphate + 4-aminobenzoate = 7,8-dihydropteroate + diphosphate. It participates in cofactor biosynthesis; tetrahydrofolate biosynthesis; 7,8-dihydrofolate from 2-amino-4-hydroxy-6-hydroxymethyl-7,8-dihydropteridine diphosphate and 4-aminobenzoate: step 1/2. In terms of biological role, catalyzes the condensation of para-aminobenzoate (pABA) with 6-hydroxymethyl-7,8-dihydropterin diphosphate (DHPt-PP) to form 7,8-dihydropteroate (H2Pte), the immediate precursor of folate derivatives. The polypeptide is Dihydropteroate synthase (folP) (Staphylococcus epidermidis (strain ATCC 35984 / DSM 28319 / BCRC 17069 / CCUG 31568 / BM 3577 / RP62A)).